A 32-amino-acid chain; its full sequence is uncharacterized protein (32 aa).

A helical membrane pass occupies residues 3–23; that stretch reads IGIIFPVVIFITAVVFLAWFF.

The protein localises to the cell inner membrane. This is an uncharacterized protein from Escherichia coli (strain K12).